Here is a 527-residue protein sequence, read N- to C-terminus: Catalase (527 aa).

Positions 1 to 22 (MADSRDPASDQMKLWKEQRAAQ) are enriched in basic and acidic residues. The interval 1–34 (MADSRDPASDQMKLWKEQRAAQKPDVLTTGGGNP) is disordered. N-acetylalanine is present on alanine 2. Residue serine 9 is modified to Phosphoserine. Lysine 13 bears the N6-succinyllysine mark. Residues histidine 75 and asparagine 148 contribute to the active site. Histidine 194, serine 201, arginine 203, and asparagine 213 together coordinate NADP(+). Lysine 221 carries the N6-succinyllysine modification. Lysine 233 carries the N6-acetyllysine modification. Residues lysine 237, tryptophan 303, and histidine 305 each contribute to the NADP(+) site. Residue tyrosine 358 coordinates heme. 2 positions are modified to phosphoserine: serine 422 and serine 434. 2 positions are modified to N6-acetyllysine; alternate: lysine 449 and lysine 480. N6-succinyllysine; alternate occurs at positions 449 and 480. Lysine 499 carries the post-translational modification N6-acetyllysine. Residue threonine 511 is modified to Phosphothreonine. Serine 517 carries the post-translational modification Phosphoserine. The short motif at 524 to 527 (KANL) is the Microbody targeting signal; atypical element.

It belongs to the catalase family. In terms of assembly, homotetramer. Interacts (via microbody targeting signal) with PEX5, monomeric form interacts with PEX5, leading to its translocation into peroxisomes. Heme serves as cofactor. It depends on NADP(+) as a cofactor.

It is found in the peroxisome matrix. The enzyme catalyses 2 H2O2 = O2 + 2 H2O. Its function is as follows. Catalyzes the degradation of hydrogen peroxide (H(2)O(2)) generated by peroxisomal oxidases to water and oxygen, thereby protecting cells from the toxic effects of hydrogen peroxide. Promotes growth of cells including T-cells, B-cells, myeloid leukemia cells, melanoma cells, mastocytoma cells and normal and transformed fibroblast cells. This is Catalase (CAT) from Canis lupus familiaris (Dog).